Reading from the N-terminus, the 113-residue chain is Pancreatic progenitor cell differentiation and proliferation factor A (113 aa).

The protein belongs to the PPDPF family.

Probable regulator of exocrine pancreas development. The sequence is that of Pancreatic progenitor cell differentiation and proliferation factor A (ppdpf-a) from Xenopus laevis (African clawed frog).